Consider the following 46-residue polypeptide: Acetylajmalan esterase (46 aa).

The N-linked (GlcNAc...) asparagine glycan is linked to Asn-39.

It belongs to the 'GDSL' lipolytic enzyme family.

The enzyme catalyses 17-O-acetylajmaline + H2O = ajmaline + acetate + H(+). It carries out the reaction 17-O-acetylnorajmaline + H2O = norajmaline + acetate + H(+). Functionally, deacetylates 17-O-acetylajmaline and 17-O-acetylnorajmaline, but is inactive toward other acetylated alkaloids. The chain is Acetylajmalan esterase from Rauvolfia verticillata (Common devil-pepper).